We begin with the raw amino-acid sequence, 580 residues long: Serine/threonine-protein kinase srk1 (580 aa).

Over residues V51–K61 the composition is skewed to polar residues. Positions V51–E91 are disordered. Residues Y124 to I421 form the Protein kinase domain. ATP is bound by residues M130 to V138 and K153. D257 (proton acceptor) is an active-site residue. Residues N530–V580 are disordered. The segment covering P537–R554 has biased composition (low complexity).

It belongs to the protein kinase superfamily. CAMK Ser/Thr protein kinase family. CaMK subfamily. Requires Mg(2+) as cofactor. In terms of processing, phosphorylated by sty1.

It is found in the cytoplasm. It localises to the nucleus. The protein resides in the nucleolus. Its subcellular location is the spore core. It catalyses the reaction L-seryl-[protein] + ATP = O-phospho-L-seryl-[protein] + ADP + H(+). The catalysed reaction is L-threonyl-[protein] + ATP = O-phospho-L-threonyl-[protein] + ADP + H(+). Delays the mitotic G2/M transition by promoting nuclear exclusion of cdc25. During osmotic stress, inhibits the G2/M transition in a sty1 stress-activated MAPK pathway-dependent manner. The sequence is that of Serine/threonine-protein kinase srk1 from Schizosaccharomyces pombe (strain 972 / ATCC 24843) (Fission yeast).